A 310-amino-acid polypeptide reads, in one-letter code: UPF0761 membrane protein VSAL_I2938 (310 aa).

Helical transmembrane passes span 34-54, 97-117, 136-156, 178-198, 207-227, and 242-262; these read YMAY…LSVL, MTAV…SAID, FSLY…SLAA, LLGW…YLLV, HALV…VGFA, and ALAA…IVLI.

Belongs to the UPF0761 family.

It localises to the cell inner membrane. In Aliivibrio salmonicida (strain LFI1238) (Vibrio salmonicida (strain LFI1238)), this protein is UPF0761 membrane protein VSAL_I2938.